The following is a 218-amino-acid chain: Small ribosomal subunit protein uS3 (218 aa).

Residues 38–106 (IREYINKRLQ…RVHINIVEIK (69 aa)) enclose the KH type-2 domain.

It belongs to the universal ribosomal protein uS3 family. In terms of assembly, part of the 30S ribosomal subunit. Forms a tight complex with proteins S10 and S14.

Binds the lower part of the 30S subunit head. Binds mRNA in the 70S ribosome, positioning it for translation. This chain is Small ribosomal subunit protein uS3, found in Geobacillus sp. (strain WCH70).